The primary structure comprises 75 residues: ATP synthase subunit epsilon, mitochondrial (75 aa).

The N-terminal 9 residues, 1–9 (MIRRSCALL), are a transit peptide targeting the mitochondrion.

The protein belongs to the eukaryotic ATPase epsilon family. F-type ATPases have 2 components, F(1) - the catalytic core - and F(o) - the membrane proton channel. F(1) has five subunits: alpha(3), beta(3), gamma(1), delta(1), epsilon(1), plus the additional subunit P18 (Tb427.05.1710) that is not present in F(1)F(o) ATP synthase from metazoa. Subunit P18 (Tb927.5.1710) interacts with the alpha subunit with a 1:1 stoichiometry; the interaction is direct. Subunit gamma is part of the central stalk. F(o) has three main subunits: a, b and c. The trypanosomal ATPase complex contains additional subunits that are not present in the F(1)F(o) ATP synthase from metazoa.

Its subcellular location is the mitochondrion. The protein localises to the mitochondrion inner membrane. Mitochondrial membrane ATP synthase (F(1)F(o) ATP synthase) produces ATP from ADP in the presence of a proton gradient across the membrane which is generated by electron transport complexes of the respiratory chain. F-type ATPases consist of two structural domains, F(1) - containing the extramembraneous catalytic core, and F(o) - containing the membrane proton channel, linked together by a central stalk and a peripheral stalk. During catalysis, ATP synthesis in the catalytic domain of F(1) is coupled via a rotary mechanism of the central stalk subunits to proton translocation. Subunits alpha and beta form the catalytic core in F(1). Rotation of the central stalk against the surrounding alpha(3)beta(3) subunits leads to hydrolysis of ATP in three separate catalytic sites on the beta subunits. Contrary to the procyclic, insect form that requires F(1)F(o) ATP synthase for ATP synthesis, the bloodstream form relies on ATP hydrolysis by F(1)F(o) ATP synthase to maintain its mitochondrial membrane potential. The chain is ATP synthase subunit epsilon, mitochondrial from Trypanosoma brucei brucei.